Here is a 70-residue protein sequence, read N- to C-terminus: MADNADDLFQIPKNFYKEGSHFIKRCVKPDRKEFLSISKAVATGFVLMGLIGYIIKLIHIPINKVLVGGA.

Residues 1–33 (MADNADDLFQIPKNFYKEGSHFIKRCVKPDRKE) are Cytoplasmic-facing. The chain crosses the membrane as a helical span at residues 34–62 (FLSISKAVATGFVLMGLIGYIIKLIHIPI). Over 63 to 70 (NKVLVGGA) the chain is Extracellular.

Belongs to the SecE/SEC61-gamma family. Heterotrimeric complex composed of SEC61-alpha, SEC61-beta and SEC61-gamma.

It localises to the endoplasmic reticulum membrane. Necessary for protein translocation in the endoplasmic reticulum. In Schizosaccharomyces pombe (strain 972 / ATCC 24843) (Fission yeast), this protein is Probable protein transport protein Sec61 subunit gamma (sss1).